A 1863-amino-acid chain; its full sequence is C-myc promoter-binding protein (1863 aa).

Residues 42-200 (KEPITDVSVI…AVYLCYKKSV (159 aa)) enclose the MABP domain. One can recognise a uDENN domain in the interval 192–364 (VYLCYKKSVA…KVPFPSPQRP (173 aa)). The cDENN domain maps to 385 to 521 (PLPLSGGKFS…PCKNLMNTLN (137 aa)). Positions 523-641 (LHQQLAKLQQ…CSFVSDKDAS (119 aa)) constitute a dDENN domain. Serine 731 is modified (phosphoserine). 2 PPR repeats span residues 772–808 (WFIC…MDPP) and 809–843 (DEVC…GIDP). Residues 905 to 952 (DLGYNSLSKDEVRRGDTSTEDIQEEKDKKGSDCSSLSESESTKGSADC) form a disordered region. The span at 912-921 (SKDEVRRGDT) shows a compositional bias: basic and acidic residues. The short motif at 917 to 933 (RRGDTSTEDIQEEKDKK) is the Bipartite nuclear localization signal element. Positions 936 to 949 (DCSSLSESESTKGS) are enriched in low complexity. Residues serine 1015, serine 1035, serine 1099, serine 1151, and serine 1152 each carry the phosphoserine modification. The tract at residues 1075-1111 (TRPNTLDIGKPPLRSKRDSLEKESSDDDTPFDGSNYL) is disordered. The tract at residues 1177 to 1202 (TEQQQKEEEEEDEDDSKSISTPSARR) is disordered. Residues serine 1225, serine 1240, and serine 1251 each carry the phosphoserine modification. Disordered regions lie at residues 1237–1306 (NKKS…SPSF) and 1348–1375 (SKDQ…TDED). Over residues 1269–1279 (TKSEEKPRDRL) the composition is skewed to basic and acidic residues. Serine 1281 is subject to Phosphoserine. 2 stretches are compositionally biased toward polar residues: residues 1297-1306 (DTLTHSSPSF) and 1348-1371 (SKDQ…STSL). 4 positions are modified to phosphoserine: serine 1508, serine 1587, serine 1589, and serine 1591.

Expressed ubiquitously. Highest expression in bone marrow, medium in peripheral blood lymphocytes and lowest in spleen. In brain, breast, and prostate, higher expression was seen in normal cells than in tumor cells. Expression is regulated in a growth- and cell cycle-dependent manner.

It localises to the nucleus. Its function is as follows. Probable guanine nucleotide exchange factor (GEF) which may activate RAB10. Promotes the exchange of GDP to GTP, converting inactive GDP-bound Rab proteins into their active GTP-bound form. According to PubMed:8056341, it may bind to ISRE-like element (interferon-stimulated response element) of MYC P2 promoter. The chain is C-myc promoter-binding protein (DENND4A) from Homo sapiens (Human).